The chain runs to 441 residues: Keratin, type I cytoskeletal 15 (441 aa).

The tract at residues leucine 2–serine 91 is head. Positions glycine 92–tryptophan 127 are coil 1A. Positions glycine 92–glycine 407 constitute an IF rod domain. Residues tyrosine 128–glutamate 149 form a linker 1 region. The interval isoleucine 150–alanine 241 is coil 1B. Positions serine 242–leucine 261 are linker 12. The tract at residues leucine 262–glutamate 403 is coil 2. Residues aspartate 404–tyrosine 441 form a tail region.

This sequence belongs to the intermediate filament family. In terms of assembly, heterotetramer of two type I and two type II keratins. In terms of tissue distribution, expressed in skin.

The sequence is that of Keratin, type I cytoskeletal 15 (KRT15) from Protopterus aethiopicus (Marbled lungfish).